The primary structure comprises 400 residues: Enoyl-[acyl-carrier-protein] reductase [NADH] (400 aa).

NAD(+) is bound by residues 48–53, 74–75, 111–112, and 139–140; these read GSSSGY, FE, DA, and LA. Tyr225 contributes to the substrate binding site. The active-site Proton donor is the Tyr235. NAD(+) is bound by residues Lys244 and 273 to 275; that span reads VVT.

This sequence belongs to the TER reductase family. As to quaternary structure, monomer.

The catalysed reaction is a 2,3-saturated acyl-[ACP] + NAD(+) = a (2E)-enoyl-[ACP] + NADH + H(+). Its pathway is lipid metabolism; fatty acid biosynthesis. Functionally, involved in the final reduction of the elongation cycle of fatty acid synthesis (FAS II). Catalyzes the reduction of a carbon-carbon double bond in an enoyl moiety that is covalently linked to an acyl carrier protein (ACP). This is Enoyl-[acyl-carrier-protein] reductase [NADH] from Aliivibrio salmonicida (strain LFI1238) (Vibrio salmonicida (strain LFI1238)).